Consider the following 342-residue polypeptide: Large ribosomal subunit protein uL3 (342 aa).

The tract at residues 1-22 (MGHRKLSSPRRGSAGLRPRKRA) is disordered.

It belongs to the universal ribosomal protein uL3 family. Part of the 50S ribosomal subunit. Forms a cluster with proteins L14 and L24e.

In terms of biological role, one of the primary rRNA binding proteins, it binds directly near the 3'-end of the 23S rRNA, where it nucleates assembly of the 50S subunit. This is Large ribosomal subunit protein uL3 from Sulfolobus acidocaldarius (strain ATCC 33909 / DSM 639 / JCM 8929 / NBRC 15157 / NCIMB 11770).